The following is a 629-amino-acid chain: Mitochondrial Rho GTPase 1 (629 aa).

At M1–R600 the chain is on the cytoplasmic side. Positions S2–H170 constitute a Miro 1 domain. GTP contacts are provided by residues G11–S18, D59–R63, and N115–D118. EF-hand domains lie at A186–K221 and A306–L341. The Ca(2+) site is built by D199, D201, D203, Y205, E210, D319, D321, D323, and E330. The Miro 2 domain occupies R421–N585. Residues G430–S437, E466–G470, and L535–D538 each bind GTP. The chain crosses the membrane as a helical; Anchor for type IV membrane protein span at residues A601–W621. Topologically, residues R622–A629 are mitochondrial intermembrane.

Belongs to the mitochondrial Rho GTPase family.

It localises to the mitochondrion outer membrane. Functionally, mitochondrial GTPase involved in mitochondrial trafficking. Probably involved in control of anterograde transport of mitochondria and their subcellular distribution. This chain is Mitochondrial Rho GTPase 1 (gem-1), found in Neurospora crassa (strain ATCC 24698 / 74-OR23-1A / CBS 708.71 / DSM 1257 / FGSC 987).